Consider the following 287-residue polypeptide: tRNA pseudouridine synthase B (287 aa).

Asp-38 acts as the Nucleophile in catalysis.

It belongs to the pseudouridine synthase TruB family. Type 1 subfamily.

The enzyme catalyses uridine(55) in tRNA = pseudouridine(55) in tRNA. In terms of biological role, responsible for synthesis of pseudouridine from uracil-55 in the psi GC loop of transfer RNAs. This chain is tRNA pseudouridine synthase B, found in Fusobacterium nucleatum subsp. nucleatum (strain ATCC 25586 / DSM 15643 / BCRC 10681 / CIP 101130 / JCM 8532 / KCTC 2640 / LMG 13131 / VPI 4355).